A 154-amino-acid polypeptide reads, in one-letter code: Movement protein (154 aa).

Disordered stretches follow at residues 83–103 (SSPT…HTRP) and 123–154 (WVAT…GRVR).

Belongs to the luteoviruses movement protein family.

Transports viral genome to neighboring plant cells directly through plasmosdesmata, without any budding. The movement protein allows efficient cell to cell propagation, by bypassing the host cell wall barrier. The chain is Movement protein from Barley yellow dwarf virus (isolate MAV) (BYDV).